We begin with the raw amino-acid sequence, 200 residues long: Snake venom metalloproteinase BmooMP-I (200 aa).

Residues arginine 5 to proline 200 enclose the Peptidase M12B domain. Residues glutamate 8 and aspartate 92 each coordinate Ca(2+). 3 disulfides stabilise this stretch: cysteine 116-cysteine 195, cysteine 155-cysteine 179, and cysteine 157-cysteine 162. Histidine 141 provides a ligand contact to Zn(2+). Residue glutamate 142 is part of the active site. Zn(2+) is bound by residues histidine 145 and histidine 151. Ca(2+) contacts are provided by cysteine 195 and asparagine 198.

The protein belongs to the venom metalloproteinase (M12B) family. P-I subfamily. As to quaternary structure, monomer. The cofactor is Zn(2+). Expressed by the venom gland.

Its subcellular location is the secreted. In terms of biological role, zinc metalloprotease that displays fibrinogenolytic, gelatinase and weak hemorrhagic activities. Degrades the three chain of fibrinogen Aalpha-chain (FGA), Bbeta-chain (FGB), and gamma (FGG). In Bothrops moojeni (Lance-headed viper), this protein is Snake venom metalloproteinase BmooMP-I.